A 158-amino-acid chain; its full sequence is MQFMSSWAADDNRTLLHFSKSTLETFRQHVQASDSDCEAGGLLLGSVHGTHMLIEHATVPTAWDKRFRYLFERMPFGHEAIALARWTASQGTIRHLGEWHTHPEDNPNPSGLDRSEWNRLSAKRRDKRPTLAVIVGRNALYIELVPGSGQGSVFSPVE.

Glu38 functions as the Proton donor/acceptor in the catalytic mechanism. 3 residues coordinate Zn(2+): His100, His102, and Asp113.

The protein belongs to the peptidase M67B family. Cap3 isopeptidase subfamily.

Functionally, metalloprotease priming reversal component of a CBASS antivirus system. CBASS (cyclic oligonucleotide-based antiphage signaling system) provides immunity against bacteriophages. The CD-NTase protein synthesizes cyclic nucleotides in response to infection; these serve as specific second messenger signals. The signals activate a diverse range of effectors, leading to bacterial cell death and thus abortive phage infection. A type II-A(GA) CBASS system. In terms of biological role, reverses the primed state of CdnA, the CD-NTase. The capV-cdnA-cap2-cap3 operon provides about 10(4)-fold protection in strain BWHPSA011 against infection by phage PaMx41. In P.aeruginosa strain PAO1 it confers protection against phages PaMx41 and JBD18 but not JBD67 (JBD18 and JBD67 do not replicate in BWHPSA011 / Pa011). When acb2 in JBD67 is deleted this CBASS operon then protects against JDB67 also. This CBASS system limits prophage induction of lysogenized JBD67 as well as viral lytic replication. This Pseudomonas aeruginosa (strain BWHPSA011 / Pa011) protein is CD-NTase/cGAS isopeptidase.